We begin with the raw amino-acid sequence, 286 residues long: Putative L-ribulose-5-phosphate 3-epimerase SgbU (286 aa).

Belongs to the L-ribulose-5-phosphate 3-epimerase family.

It catalyses the reaction L-ribulose 5-phosphate = L-xylulose 5-phosphate. Its function is as follows. Catalyzes the isomerization of L-xylulose-5-phosphate to L-ribulose-5-phosphate. In Haemophilus influenzae (strain ATCC 51907 / DSM 11121 / KW20 / Rd), this protein is Putative L-ribulose-5-phosphate 3-epimerase SgbU (sgbU).